Here is a 307-residue protein sequence, read N- to C-terminus: MIAYENIEFFICLVNVLGNNMYNILFFIFLSIAIPFLLFLAWKQHLKTKEIRSYLLKEGYNIIFNGEGNSYLAFNISNATFRAGNLTSNDYFQASISYIHDYRWEWKEVEAKKINNIFIIYISNIDFPSQKLFYRNNKSLAEIDWAKLQAIFHQPYEIQNDVMQDNNNTHYDFFISHAKEDKDTFVRPLVDELNRLGVIIWYDEQTLEVGDSLRRNIDLGLRKANYGIVILSHNFLNKKWTQYELDSLINRAVYDDNKIILPIWHNINAQEVSKYSHYLADKMALQTSLYSVKEIARELAEIAYRRR.

A helical membrane pass occupies residues Y22–W42. The region spanning T169–A303 is the TIR domain. NAD(+)-binding positions include A178–K179 and E208. E244 is an active-site residue.

In terms of assembly, interacts with host MYD88. Interacts with host TLR4.

Its subcellular location is the secreted. It localises to the membrane. The enzyme catalyses NAD(+) + H2O = ADP-D-ribose + nicotinamide + H(+). It catalyses the reaction NADP(+) + H2O = ADP-D-ribose 2'-phosphate + nicotinamide + H(+). Functionally, virulence factor that suppresses host Toll-like receptor (TLR)-mediated cytokine production upon infection, thereby increasing bacterial burden in the urinary tract and promoting renal tissue damage. Acts as a NAD(+) hydrolase (NADase) by catalyzing cleavage of NAD(+) into ADP-D-ribose (ADPR) and nicotinamide. Also able to hydrolyze NADP(+), but not other NAD(+)-related molecules. This chain is NAD(+) hydrolase TcpC, found in Escherichia coli O6:H1 (strain CFT073 / ATCC 700928 / UPEC).